We begin with the raw amino-acid sequence, 269 residues long: Phosphate import ATP-binding protein PstB (269 aa).

Residues 22-264 (AEVRDLNFYY…PVQQKTADYV (243 aa)) enclose the ABC transporter domain. 54 to 61 (GPSGCGKT) serves as a coordination point for ATP.

It belongs to the ABC transporter superfamily. Phosphate importer (TC 3.A.1.7) family. The complex is composed of two ATP-binding proteins (PstB), two transmembrane proteins (PstC and PstA) and a solute-binding protein (PstS).

The protein localises to the cell inner membrane. The enzyme catalyses phosphate(out) + ATP + H2O = ADP + 2 phosphate(in) + H(+). Its function is as follows. Part of the ABC transporter complex PstSACB involved in phosphate import. Responsible for energy coupling to the transport system. This Thermosynechococcus vestitus (strain NIES-2133 / IAM M-273 / BP-1) protein is Phosphate import ATP-binding protein PstB.